A 516-amino-acid chain; its full sequence is Lysophosphatidylcholine acyltransferase 2B (516 aa).

N-linked (GlcNAc...) asparagine glycosylation occurs at Asn28. Helical transmembrane passes span 44 to 64, 68 to 88, and 102 to 122; these read THLS…LVPV, CIVF…INLP, and LIKS…GFLV. An HXXXXD motif motif is present at residues 142–147; the sequence is HSTFFD. EF-hand domains follow at residues 387–422 and 424–459; these read PISE…LCNP and NTEK…AFGV. Ca(2+) contacts are provided by Asp400, Asn402, Asp404, Thr406, Glu411, Asp437, Asp439, Asp441, Tyr443, and Glu448.

It belongs to the 1-acyl-sn-glycerol-3-phosphate acyltransferase family.

It localises to the membrane. Its pathway is lipid metabolism; phospholipid metabolism. Functionally, probable acetyltransferase. This chain is Lysophosphatidylcholine acyltransferase 2B (Lpcat2b), found in Mus musculus (Mouse).